Consider the following 355-residue polypeptide: Small ribosomal subunit protein uS2 (355 aa).

Belongs to the universal ribosomal protein uS2 family.

In Methylobacterium radiotolerans (strain ATCC 27329 / DSM 1819 / JCM 2831 / NBRC 15690 / NCIMB 10815 / 0-1), this protein is Small ribosomal subunit protein uS2.